The chain runs to 571 residues: S100P-binding protein (571 aa).

The span at 270–280 (SDIPFDGDIDE) shows a compositional bias: acidic residues. 2 disordered regions span residues 270 to 312 (SDIP…LESV) and 356 to 385 (NGQN…CSQS). Over residues 299 to 309 (TSESTPASSEL) the composition is skewed to polar residues. Over residues 365–378 (PLPPSDTAPGPQLP) the composition is skewed to pro residues.

The protein localises to the nucleus. In Xenopus tropicalis (Western clawed frog), this protein is S100P-binding protein (s100pbp).